The chain runs to 671 residues: APC membrane recruitment protein 2 (671 aa).

4 disordered regions span residues 1–24 (METS…ASVG), 76–358 (SGGT…SDPS), 391–414 (EAGP…KNPG), and 444–598 (SQTE…PLRT). 2 stretches are compositionally biased toward gly residues: residues 7-21 (RGGG…GAGA) and 126-137 (GGDSGGGGGGRP). At Ser162 the chain carries Phosphoserine. Residues 171–182 (GRSENGKGEPVD) are compositionally biased toward basic and acidic residues. Residues Ser229 and Ser233 each carry the phosphoserine modification. Composition is skewed to basic and acidic residues over residues 236-260 (CVKE…RDPA), 276-286 (APARSCREAEG), and 295-307 (ARGE…RRAE). A compositionally biased stretch (low complexity) spans 342-353 (APAAPDPASVDP). Ser355 and Ser358 each carry phosphoserine. Positions 447 to 458 (EEQGPEPQEGAA) are enriched in low complexity. Basic and acidic residues-rich tracts occupy residues 472-487 (TPKD…DASS) and 498-514 (IEPH…KEQQ).

This sequence belongs to the Amer family. As to quaternary structure, interacts with APC.

The protein localises to the cell membrane. Negative regulator of the canonical Wnt signaling pathway involved in neuroectodermal patterning. Acts by specifically binding phosphatidylinositol 4,5-bisphosphate (PtdIns(4,5)P2), translocating to the cell membrane and interacting with key regulators of the canonical Wnt signaling pathway, such as components of the beta-catenin destruction complex. In Homo sapiens (Human), this protein is APC membrane recruitment protein 2 (AMER2).